Reading from the N-terminus, the 99-residue chain is MALTKAEMVERLFDEVGLNKREAKEFVDAFFDLLRDALEQGKEIKLSGFGNFELRCKNQRPGRNPKTGEEIPISARTVVTFRSGQKLKERVDAYVGSRQ.

It belongs to the bacterial histone-like protein family. As to quaternary structure, heterodimer of an alpha and a beta chain.

Functionally, this protein is one of the two subunits of integration host factor, a specific DNA-binding protein that functions in genetic recombination as well as in transcriptional and translational control. The sequence is that of Integration host factor subunit alpha from Xylella fastidiosa (strain M12).